The primary structure comprises 215 residues: Probable transaldolase 1 (215 aa).

Catalysis depends on Lys-83, which acts as the Schiff-base intermediate with substrate.

This sequence belongs to the transaldolase family. Type 3B subfamily.

It localises to the cytoplasm. The catalysed reaction is D-sedoheptulose 7-phosphate + D-glyceraldehyde 3-phosphate = D-erythrose 4-phosphate + beta-D-fructose 6-phosphate. The protein operates within carbohydrate degradation; pentose phosphate pathway; D-glyceraldehyde 3-phosphate and beta-D-fructose 6-phosphate from D-ribose 5-phosphate and D-xylulose 5-phosphate (non-oxidative stage): step 2/3. In terms of biological role, transaldolase is important for the balance of metabolites in the pentose-phosphate pathway. The chain is Probable transaldolase 1 from Bacillus anthracis.